The primary structure comprises 315 residues: Probable cell division protein WhiA (315 aa).

Positions 280-313 (SLKELGQMLDPQVGKSGINHRLRKIEKIAEELRT) form a DNA-binding region, H-T-H motif.

Belongs to the WhiA family.

Its function is as follows. Involved in cell division and chromosome segregation. This Clostridium botulinum (strain Alaska E43 / Type E3) protein is Probable cell division protein WhiA.